A 315-amino-acid chain; its full sequence is Protein FRA10AC1 (315 aa).

M1 carries the post-translational modification N-acetylmethionine. The tract at residues 1–28 (MHGHGGYDSDFSDDERCGESSKRKKRTV) is disordered. Phosphoserine occurs at positions 9 and 12. K36 carries the N6-acetyllysine modification. The segment covering 226 to 235 (EIKSKKRKDK) has biased composition (basic residues). The disordered stretch occupies residues 226–315 (EIKSKKRKDK…FDEYFQDLFL (90 aa)). The span at 236-245 (TKKDCEESSH) shows a compositional bias: basic and acidic residues. A phosphoserine mark is found at S251, S252, S278, S283, and S285. Residues 268 to 278 (KKSEDSLLRNS) show a composition bias toward basic and acidic residues. Over residues 301–315 (SQEEEFDEYFQDLFL) the composition is skewed to acidic residues.

As to quaternary structure, interacts with ESS2. Ubiquitously expressed with higher expression in brain, heart, skeletal muscle, kidney and liver.

It localises to the nucleus. May be involved in pre-mRNA splicing. This Homo sapiens (Human) protein is Protein FRA10AC1 (FRA10AC1).